The primary structure comprises 422 residues: Glutamate-1-semialdehyde 2,1-aminomutase (422 aa).

Lys264 carries the post-translational modification N6-(pyridoxal phosphate)lysine.

This sequence belongs to the class-III pyridoxal-phosphate-dependent aminotransferase family. HemL subfamily. As to quaternary structure, homodimer. The cofactor is pyridoxal 5'-phosphate.

The protein localises to the cytoplasm. The catalysed reaction is (S)-4-amino-5-oxopentanoate = 5-aminolevulinate. It participates in porphyrin-containing compound metabolism; protoporphyrin-IX biosynthesis; 5-aminolevulinate from L-glutamyl-tRNA(Glu): step 2/2. The polypeptide is Glutamate-1-semialdehyde 2,1-aminomutase (Clostridium kluyveri (strain ATCC 8527 / DSM 555 / NBRC 12016 / NCIMB 10680 / K1)).